The primary structure comprises 247 residues: Carboxy-S-adenosyl-L-methionine synthase (247 aa).

S-adenosyl-L-methionine contacts are provided by residues Tyr39, 64–66 (GCS), 89–90 (DN), 117–118 (DI), Asn132, and Arg199.

It belongs to the class I-like SAM-binding methyltransferase superfamily. Cx-SAM synthase family. Homodimer.

The enzyme catalyses prephenate + S-adenosyl-L-methionine = carboxy-S-adenosyl-L-methionine + 3-phenylpyruvate + H2O. Catalyzes the conversion of S-adenosyl-L-methionine (SAM) to carboxy-S-adenosyl-L-methionine (Cx-SAM). The polypeptide is Carboxy-S-adenosyl-L-methionine synthase (Salmonella arizonae (strain ATCC BAA-731 / CDC346-86 / RSK2980)).